The chain runs to 96 residues: Cystatin (96 aa).

In terms of domain architecture, Cystatin spans 22–65; the sequence is DFIKAALNETGTHAGRKYKVLRSSQQVVAGMKYTFYIVFEDDES. An N-linked (GlcNAc...) asparagine glycan is attached at asparagine 29.

It belongs to the cystatin family. Interacts with cathepsin L-like peptidase; the interaction results in inhibition of cathepsin L-like peptidase activity. As to expression, salivary gland. Midgut.

Functionally, cysteine proteinase inhibitor. Inhibits cathepsin L-like peptidase. Increases cell viability following apoptosis induction by staurosporine. Inhibits human cathepsin S (CTSS), human cathepsin L2 (CTSV), human cathepsin L (CTSL), human cathepsin B (CTSB) and papain. (Microbial infection) Modulates dengue virus type 2 replication in salivary glands. The polypeptide is Cystatin (Aedes aegypti (Yellowfever mosquito)).